A 455-amino-acid chain; its full sequence is Bifunctional protein GlmU (455 aa).

The pyrophosphorylase stretch occupies residues 1 to 229 (MSKKVMSVVI…LNEIEGINDG (229 aa)). Residues 11 to 14 (LAAG), Lys-25, Gln-76, 81 to 82 (GT), 103 to 105 (YGD), Gly-140, Glu-154, Asn-169, and Asn-227 contribute to the UDP-N-acetyl-alpha-D-glucosamine site. Asp-105 is a binding site for Mg(2+). Asn-227 is a Mg(2+) binding site. The linker stretch occupies residues 230-250 (LQLARLERLFQKQQAEKLLLS). The tract at residues 251-455 (GVRILDPARF…IQGWKRPKKT (205 aa)) is N-acetyltransferase. Residues Arg-333 and Lys-351 each contribute to the UDP-N-acetyl-alpha-D-glucosamine site. The Proton acceptor role is filled by His-363. Residues Tyr-366 and Asn-377 each contribute to the UDP-N-acetyl-alpha-D-glucosamine site. Residues Ala-380, 386-387 (NY), Ser-405, Ala-423, and Arg-440 each bind acetyl-CoA.

The protein in the N-terminal section; belongs to the N-acetylglucosamine-1-phosphate uridyltransferase family. This sequence in the C-terminal section; belongs to the transferase hexapeptide repeat family. As to quaternary structure, homotrimer. Mg(2+) is required as a cofactor.

It is found in the cytoplasm. It catalyses the reaction alpha-D-glucosamine 1-phosphate + acetyl-CoA = N-acetyl-alpha-D-glucosamine 1-phosphate + CoA + H(+). It carries out the reaction N-acetyl-alpha-D-glucosamine 1-phosphate + UTP + H(+) = UDP-N-acetyl-alpha-D-glucosamine + diphosphate. The protein operates within nucleotide-sugar biosynthesis; UDP-N-acetyl-alpha-D-glucosamine biosynthesis; N-acetyl-alpha-D-glucosamine 1-phosphate from alpha-D-glucosamine 6-phosphate (route II): step 2/2. It functions in the pathway nucleotide-sugar biosynthesis; UDP-N-acetyl-alpha-D-glucosamine biosynthesis; UDP-N-acetyl-alpha-D-glucosamine from N-acetyl-alpha-D-glucosamine 1-phosphate: step 1/1. It participates in bacterial outer membrane biogenesis; LPS lipid A biosynthesis. Functionally, catalyzes the last two sequential reactions in the de novo biosynthetic pathway for UDP-N-acetylglucosamine (UDP-GlcNAc). The C-terminal domain catalyzes the transfer of acetyl group from acetyl coenzyme A to glucosamine-1-phosphate (GlcN-1-P) to produce N-acetylglucosamine-1-phosphate (GlcNAc-1-P), which is converted into UDP-GlcNAc by the transfer of uridine 5-monophosphate (from uridine 5-triphosphate), a reaction catalyzed by the N-terminal domain. This is Bifunctional protein GlmU from Hamiltonella defensa subsp. Acyrthosiphon pisum (strain 5AT).